Here is a 376-residue protein sequence, read N- to C-terminus: Chaperone protein DnaJ (376 aa).

In terms of domain architecture, J spans 5 to 70 (DFYEVLGVGR…DKKAAYDQFG (66 aa)). The CR-type zinc finger occupies 132–210 (GLTKELRIPT…CHGEGRVEKS (79 aa)). The Zn(2+) site is built by cysteine 145, cysteine 148, cysteine 162, cysteine 165, cysteine 184, cysteine 187, cysteine 198, and cysteine 201. CXXCXGXG motif repeat units lie at residues 145–152 (CDACDGSG), 162–169 (CGTCHGQG), 184–191 (CPTCHGRG), and 198–205 (CNKCHGEG).

This sequence belongs to the DnaJ family. Homodimer. Requires Zn(2+) as cofactor.

It localises to the cytoplasm. Participates actively in the response to hyperosmotic and heat shock by preventing the aggregation of stress-denatured proteins and by disaggregating proteins, also in an autonomous, DnaK-independent fashion. Unfolded proteins bind initially to DnaJ; upon interaction with the DnaJ-bound protein, DnaK hydrolyzes its bound ATP, resulting in the formation of a stable complex. GrpE releases ADP from DnaK; ATP binding to DnaK triggers the release of the substrate protein, thus completing the reaction cycle. Several rounds of ATP-dependent interactions between DnaJ, DnaK and GrpE are required for fully efficient folding. Also involved, together with DnaK and GrpE, in the DNA replication of plasmids through activation of initiation proteins. In Shewanella halifaxensis (strain HAW-EB4), this protein is Chaperone protein DnaJ.